The chain runs to 1073 residues: MEETYAPRCSMPAELHHPYSKFSDWKFKLFRVRSMERAPLPGEMQLERGALSGVVASAPLGETVGDVVGLPGSVMKLWLGGKSKENVEGPGKRVDLKLQEMDTYMNHLRCLCRLCGGALRKAKGPEHEVQGLLDEASMSALRRVGCKATSWPEVILKVFKVDVAGDMEVVHPPFFCQRCWTLAMRGGGFCSFSRTHVPGWRPHTTLCLLCTPRNPHYRGERKRRKPTRGAQHLAKRTKWDLQDNAAIVGEKRAWRTVIDPPQGPGLRPWVRSSVQRAQWVKSITLCQKEHLSARLLSEDLPVDFLSSVTCQVCDHLLSEPVQSPCRHLFCRSCIAKYIYSLGPHCPACTLPCGPADLTAPAKGFLGVLHSLPLLCPRESCGEQVRLDSFRAHCLGHHLEEVDGDHKSAENSLDNFLPVNKGGRPRQHLLSLTRRAQKHRLRDLKTQVKVFAEKEEGGDTKSVCLTLFLLALRAGNEHRQADELEAMMQGRGFGLHPAVCLAIRVNTFLSCSQYHKMYRTVKATSGRQIFQPLHTLRTAEKELLPGYHPFEWQPALKSVSTSCHVGIIDGLSGWIASVDDSPADTVTRRFRYDVALVSALKDLEEDIMEGLRERGLEDSACTSGFSVMIKESCDGMGDVSEKHGGGPPVPEKPVRFSFTIMSVSIQAEGEDEAITIFREPKPNSEMSCKPLSLMFVDESDHETLTGVLGPVVAERNAMKHSRLILSVGGLSRSFRFHFRGTGYDEKMVREMEGLEASGSTYICTLCDSTRAEASQNMTLHSVTRSHDENLERYELWRTNPHSESAEELRDRVKGVSAKPFMETQPTLDALHCDIGNATEFYKIFQDEIGEVYHKANPSREQRRSWRAALDKQLRKKMKLKPVMRMNGNYARKLMTREAVEAVCELVCSEERQEALRELMGLYIQMKPVWRSTCPAKECPDELCRYSFNSQRFAELLSTVFKYRYDGKITNYLHKTLAHVPEIVERDGSIGAWASEGNESGNKLFRRFRKMNARQSKTFELEDVLKHHWLYTSKYLQKFMEAHKDSAKALQATIDTVGSQETQEDADMSLDVPDF.

Zn(2+)-binding residues include Cys-286, His-290, Cys-310, Cys-313, His-315, Cys-325, His-327, Cys-330, Cys-333, Cys-345, Cys-348, Cys-375, Cys-380, His-392, and His-396. The RING-type zinc finger occupies 310–349 (CQVCDHLLSEPVQSPCRHLFCRSCIAKYIYSLGPHCPACT). An RAG1-type zinc finger spans residues 371–400 (LPLLCPRESCGEQVRLDSFRAHCLGHHLEE). The segment at residues 421–488 (GGRPRQHLLS…QADELEAMMQ (68 aa)) is a DNA-binding region (NBD). 3 residues coordinate a divalent metal cation: Asp-633, Asp-743, and Glu-997.

It belongs to the RAG1 family. In terms of assembly, homodimer. Component of the RAG complex composed of core components rag1 and rag2. Mg(2+) serves as cofactor. Requires Mn(2+) as cofactor.

Its subcellular location is the nucleus. The catalysed reaction is S-ubiquitinyl-[E2 ubiquitin-conjugating enzyme]-L-cysteine + [acceptor protein]-L-lysine = [E2 ubiquitin-conjugating enzyme]-L-cysteine + N(6)-ubiquitinyl-[acceptor protein]-L-lysine.. Its function is as follows. Catalytic component of the RAG complex, a multiprotein complex that mediates the DNA cleavage phase during V(D)J recombination. V(D)J recombination assembles a diverse repertoire of immunoglobulin and T-cell receptor genes in developing B and T lymphocytes through rearrangement of different V (variable), in some cases D (diversity), and J (joining) gene segments. In the RAG complex, RAG1 mediates the DNA-binding to the conserved recombination signal sequences (RSS) and catalyzes the DNA cleavage activities by introducing a double-strand break between the RSS and the adjacent coding segment. RAG2 is not a catalytic component but is required for all known catalytic activities. DNA cleavage occurs in 2 steps: a first nick is introduced in the top strand immediately upstream of the heptamer, generating a 3'-hydroxyl group that can attack the phosphodiester bond on the opposite strand in a direct transesterification reaction, thereby creating 4 DNA ends: 2 hairpin coding ends and 2 blunt, 5'-phosphorylated ends. In addition to its endonuclease activity, RAG1 also acts as an E3 ubiquitin-protein ligase that mediates monoubiquitination of histone H3. Histone H3 monoubiquitination is required for the joining step of V(D)J recombination. This Oncorhynchus mykiss (Rainbow trout) protein is V(D)J recombination-activating protein 1 (rag1).